The sequence spans 454 residues: CCA-adding enzyme (454 aa).

ATP contacts are provided by S59 and R62. S59 and R62 together coordinate CTP. Mg(2+) contacts are provided by D71, D73, and D125. ATP contacts are provided by H148, K167, and Y176. 3 residues coordinate CTP: H148, K167, and Y176.

This sequence belongs to the tRNA nucleotidyltransferase/poly(A) polymerase family. Archaeal CCA-adding enzyme subfamily. Homodimer. Requires Mg(2+) as cofactor.

It carries out the reaction a tRNA precursor + 2 CTP + ATP = a tRNA with a 3' CCA end + 3 diphosphate. The catalysed reaction is a tRNA with a 3' CCA end + 2 CTP + ATP = a tRNA with a 3' CCACCA end + 3 diphosphate. Its function is as follows. Catalyzes the addition and repair of the essential 3'-terminal CCA sequence in tRNAs without using a nucleic acid template. Adds these three nucleotides in the order of C, C, and A to the tRNA nucleotide-73, using CTP and ATP as substrates and producing inorganic pyrophosphate. tRNA 3'-terminal CCA addition is required both for tRNA processing and repair. Also involved in tRNA surveillance by mediating tandem CCA addition to generate a CCACCA at the 3' terminus of unstable tRNAs. While stable tRNAs receive only 3'-terminal CCA, unstable tRNAs are marked with CCACCA and rapidly degraded. The polypeptide is CCA-adding enzyme (Methanosarcina acetivorans (strain ATCC 35395 / DSM 2834 / JCM 12185 / C2A)).